A 226-amino-acid polypeptide reads, in one-letter code: Large ribosomal subunit protein uL1 (226 aa).

The protein belongs to the universal ribosomal protein uL1 family. As to quaternary structure, part of the 50S ribosomal subunit.

Functionally, binds directly to 23S rRNA. The L1 stalk is quite mobile in the ribosome, and is involved in E site tRNA release. Protein L1 is also a translational repressor protein, it controls the translation of the L11 operon by binding to its mRNA. The sequence is that of Large ribosomal subunit protein uL1 from Borrelia garinii subsp. bavariensis (strain ATCC BAA-2496 / DSM 23469 / PBi) (Borreliella bavariensis).